Consider the following 9904-residue polypeptide: Extracellular matrix-binding protein ebh (9904 aa).

Residues 1-39 form the signal peptide; the sequence is MNYRDKIQKFSIRKYTVGTFSTVIATLVFLGFNTSQAHA. The span at 41–59 shows a compositional bias: polar residues; that stretch reads ETNQPASVVKQKQQSNNEQ. 2 disordered regions span residues 41-153 and 250-277; these read ETNQ…NDNR and PQRQ…PRSV. A compositionally biased stretch (low complexity) spans 65–78; sequence SQVQNSQNSQNSQS. The span at 79-117 shows a compositional bias: polar residues; it reads LSATHENEQPNISQANLVDQKVAQSSTTNDEQPASQNVN. The segment covering 130–140 has biased composition (basic and acidic residues); it reads PDKEEGKHKQN. 2 stretches are compositionally biased toward polar residues: residues 141 to 151 and 250 to 266; these read ESQSANKNGND and PQRQ…QTRS. FIVAR domains are found at residues 2524–2580, 2610–2666, 2687–2750, 2780–2836, 2864–2919, 2947–3002, 3030–3085, 3154–3212, 3280–3339, 3407–3465, 3533–3591, 3659–3717, 3785–3843, 3911–3969, 4037–4095, 4160–4208, 4276–4334, 4402–4460, 4528–4586, 4654–4712, 4780–4838, 4906–4964, 5032–5090, 5158–5216, 5284–5342, 5410–5468, 5536–5593, 5661–5719, 5787–5845, 5913–5971, 6039–6097, 6175–6223, 6291–6349, 6417–6475, 6543–6601, 6669–6727, 6795–6853, 6921–6979, 7047–7105, 7173–7231, 7299–7357, 7425–7486, 7551–7609, 7677–7735, 7803–7860, 7928–7986, 8054–8112, 8180–8238, 8306–8364, 8432–8490, 8558–8612, 8680–8739, and 8934–8990; these read AKNH…VSDA, SKNN…ISEE, DTHT…VQTA, AKTK…IAEE, AKTQ…IRQN, AKNQ…INTN, AKTQ…INDK, AMTK…VNQK, AMTG…VNNA, AMGN…VNRA, AMGN…VTEA, AMNT…ITQK, AMAS…VEAA, AMGN…VEQA, AMGT…VTAA, DKDA…VDNA, AMGA…INGM, AMTA…VNSA, AMKG…ITQA, AMHS…VEQA, AMGQ…VERA, AMTA…VTNA, AMKG…INQA, AMTN…VESA, AMSN…VEQA, AMNQ…INQK, AMGN…VQAA, AMGQ…VEAA, AMQR…VEQA, AMDQ…VTAA, AMNQ…VTQA, DKDQ…VEAA, AMGN…VEAA, AMDK…INQA, AMTQ…ITAA, AMTQ…IQQA, AMTN…VEQA, AMTQ…VAQA, AMGT…VTQA, AMGN…ITRA, AMDQ…ITNE, AMEL…VNGA, AMHG…INQA, LMDA…VSSA, AIKA…IDQA, AMEA…VEQL, AMQA…VEQL, AMET…VEQA, SMDQ…VDQA, AMDQ…VIKL, and AMET…INGA. A helical membrane pass occupies residues 9710-9730; sequence IKNAIGVVGISGLLASFWFFI. A disordered region spans residues 9807 to 9904; sequence RRKEDEEDVE…KKKKSKKNKK (98 aa). Composition is skewed to basic and acidic residues over residues 9822–9832 and 9871–9881; these read TDEKVLKDNEH and QKDNQSKDKKS. The segment covering 9886 to 9904 has biased composition (basic residues); the sequence is TSKKVAAKKKKKKSKKNKK.

Its subcellular location is the cell membrane. This is Extracellular matrix-binding protein ebh (ebh) from Staphylococcus aureus (strain MW2).